The following is a 766-amino-acid chain: Serine/threonine-protein kinase PKH1 (766 aa).

Residues 1–52 are disordered; that stretch reads MGNRSLTEADHALLSKPLVPTSAEHTQTQEYPRPFVDGSNSQSGSELQASPQ. Residues 38 to 52 are compositionally biased toward polar residues; the sequence is GSNSQSGSELQASPQ. One can recognise a Protein kinase domain in the interval 125 to 391; the sequence is FKFGEQLGDG…IKQIKAHLFF (267 aa). Residues 135-137 and lysine 154 contribute to the ATP site; that span reads SYS. The segment at 156–201 is PIF-pocket; the sequence is LSKEYLIRQKKVKYVTVEKLALQKLNGTKGIFKLFFTFQDEASLYF. ATP contacts are provided by residues 204–206 and aspartate 210; that span reads EYA. Residue aspartate 249 is the Proton acceptor of the active site. ATP-binding residues include glutamate 253 and aspartate 267. Residues serine 294 and serine 296 each carry the phosphoserine modification. Residues 476–495 are compositionally biased toward polar residues; sequence TSQPKLGSKSSTSVRSASNN. Disordered stretches follow at residues 476–529 and 725–745; these read TSQP…NRSR and PEEG…SSSN. The span at 511–521 shows a compositional bias: low complexity; the sequence is SVSSPSISTTS. The segment covering 735-745 has biased composition (polar residues); it reads PTSLQTRSSSN.

Belongs to the protein kinase superfamily. AGC Ser/Thr protein kinase family. PDPK1 subfamily.

The catalysed reaction is L-seryl-[protein] + ATP = O-phospho-L-seryl-[protein] + ADP + H(+). The enzyme catalyses L-threonyl-[protein] + ATP = O-phospho-L-threonyl-[protein] + ADP + H(+). Its function is as follows. Activates YPK1 by phosphorylating of a threonine residue. This chain is Serine/threonine-protein kinase PKH1 (PKH1), found in Saccharomyces cerevisiae (strain ATCC 204508 / S288c) (Baker's yeast).